Reading from the N-terminus, the 545-residue chain is E3 ubiquitin-protein ligase ipaH9.8 (545 aa).

An interaction with target proteins region spans residues 1–242 (MLPINNNFSL…YHGPRIYFSM (242 aa)). LRR repeat units lie at residues 57-77 (NSDE…NLPA), 78-99 (QITL…PVTL), 100-117 (KKLY…VLPP), 118-139 (ALES…PDSL), 140-157 (LTMN…SLPL), 158-179 (ALKN…SEGN), 182-203 (VVRE…ILNL), and 205-228 (NECS…QRLT). A linker region spans residues 243 to 250 (SDGQQNTL). An E3 ubiquitin-protein ligase catalytic domain region spans residues 251 to 545 (HRPLADAVTA…SENGSQLHHS (295 aa)). The NEL domain maps to 253–545 (PLADAVTAWF…SENGSQLHHS (293 aa)). Cys337 acts as the Glycyl thioester intermediate in catalysis.

It belongs to the LRR-containing bacterial E3 ligase family. In terms of assembly, also interacts with human and mouse U2AF1 (U2AF35). Ubiquitinated in the presence of host E1 ubiquitin-activating enzyme, E2 ubiquitin-conjugating enzyme and ubiquitin.

It localises to the secreted. The protein resides in the host cytoplasm. The protein localises to the host nucleus. It catalyses the reaction S-ubiquitinyl-[E2 ubiquitin-conjugating enzyme]-L-cysteine + [acceptor protein]-L-lysine = [E2 ubiquitin-conjugating enzyme]-L-cysteine + N(6)-ubiquitinyl-[acceptor protein]-L-lysine.. Exists in an autoinhibited state in the absence of substrate protein, due to interactions of the leucine-rich repeats with NEL domain. Is activated upon binding to a substrate protein. In terms of biological role, effector E3 ubiquitin ligase that interferes with host's ubiquitination pathway and modulates the acute inflammatory responses, thus facilitating bacterial colonization within the host cell. Interacts with IKBKG (NEMO) and TNIP1 (ABIN-1), a ubiquitin-binding adapter protein, which results in TNIP1-dependent 'Lys-27'-linked polyubiquitination of IKBKG. Consequently, polyubiquitinated IKBKG undergoes proteasome-dependent degradation, which perturbs NF-kappa-B activation during bacterial infection. Mediates polyubiquitination of host U2AF1, leading to its proteasomal degradation. Catalyzes 'Lys-48'-linked polyubiquitination and subsequent degradation of a subset of host guanylate-binding proteins (GBP1, GBP2, GBP4 and GBP6), thereby suppressing host cell defense. In contrast, host GBP3 and GBP7 are not ubiquitinated by IpaH9.8. Uses UBE2D2 (UBCH5B) as an E2 ubiquitin-conjugating enzyme. The sequence is that of E3 ubiquitin-protein ligase ipaH9.8 (ipaH9.8) from Shigella boydii serotype 4 (strain Sb227).